The sequence spans 482 residues: Glutamyl-tRNA(Gln) amidotransferase subunit A (482 aa).

Residues lysine 75 and serine 150 each act as charge relay system in the active site. Serine 174 (acyl-ester intermediate) is an active-site residue.

It belongs to the amidase family. GatA subfamily. As to quaternary structure, heterotrimer of A, B and C subunits.

The enzyme catalyses L-glutamyl-tRNA(Gln) + L-glutamine + ATP + H2O = L-glutaminyl-tRNA(Gln) + L-glutamate + ADP + phosphate + H(+). Allows the formation of correctly charged Gln-tRNA(Gln) through the transamidation of misacylated Glu-tRNA(Gln) in organisms which lack glutaminyl-tRNA synthetase. The reaction takes place in the presence of glutamine and ATP through an activated gamma-phospho-Glu-tRNA(Gln). The chain is Glutamyl-tRNA(Gln) amidotransferase subunit A from Rippkaea orientalis (strain PCC 8801 / RF-1) (Cyanothece sp. (strain PCC 8801)).